We begin with the raw amino-acid sequence, 115 residues long: Alpha-endosulfine (115 aa).

Residues 1–10 show a composition bias toward polar residues; it reads MSSENLSDTQ. The segment at 1 to 27 is disordered; it reads MSSENLSDTQMEYEDEKQDSQEKNANL. Position 65 is a phosphoserine; by GWL (S65). The segment at 77-115 is disordered; it reads NKQLPVAGPDKNLVTGDHIPTPQDLPQRRSSLVTSKLAG. Positions 104-115 are enriched in polar residues; that stretch reads RRSSLVTSKLAG.

Belongs to the endosulfine family. In terms of processing, phosphorylation at Ser-65 by gwl during mitosis is essential for interaction with ppp2r2d (PR55-delta) and subsequent inactivation of PP2A.

Its subcellular location is the cytoplasm. Protein phosphatase inhibitor that specifically inhibits protein phosphatase 2A (PP2A) during mitosis. When phosphorylated at Ser-67 during mitosis, specifically interacts with ppp2r2d (PR55-delta) and inhibits its activity, leading to inactivation of PP2A, an essential condition to keep cyclin-B1-CDK1 activity high during M phase. The sequence is that of Alpha-endosulfine (ensa) from Salmo salar (Atlantic salmon).